Here is a 384-residue protein sequence, read N- to C-terminus: Guanine nucleotide-binding protein alpha-1 subunit (384 aa).

Gly-2 is lipidated: N-myristoyl glycine. A lipid anchor (S-palmitoyl cysteine) is attached at Cys-5. Residues 38 to 384 enclose the G-alpha domain; it reads HIRKLLLLGA…RRNLFEAGLL (347 aa). The tract at residues 41–54 is G1 motif; the sequence is KLLLLGAGESGKST. Residues Glu-49, Ser-50, Gly-51, Lys-52, Ser-53, Thr-54, Asp-163, Leu-188, Thr-194, Gly-222, Asn-288, Lys-289, Asp-291, and Ala-356 each coordinate GTP. Ser-53 contacts Mg(2+). The G2 motif stretch occupies residues 186 to 194; sequence DVLLARVRT. Thr-194 contacts Mg(2+). Positions 215 to 224 are G3 motif; the sequence is YRLFDVGGQR. Residues 284–291 form a G4 motif region; that stretch reads MLFLNKFD. The interval 354 to 359 is G5 motif; sequence TTALDQ.

This sequence belongs to the G-alpha family. In terms of assembly, g proteins are composed of 3 units; alpha, beta and gamma. The alpha chain contains the guanine nucleotide binding site. It depends on Mg(2+) as a cofactor.

In terms of biological role, guanine nucleotide-binding proteins (G proteins) are involved as modulators or transducers in various transmembrane signaling systems. In Pisum sativum (Garden pea), this protein is Guanine nucleotide-binding protein alpha-1 subunit (GPA1).